Consider the following 145-residue polypeptide: Secreted LysM effector Vd2LysM (145 aa).

An N-terminal signal peptide occupies residues 1–18 (MRPDVFVLFTAFLGPAAA). 2 LysM domains span residues 31–75 (GWYI…KIKV) and 96–140 (GWYH…DIVV).

The protein belongs to the secreted LysM effector family. As to quaternary structure, forms homodimers in a chitin-independent manner through interactions at the N-termini of EPL2 monomers. Homodimers are further polymerized in a chitin-dependent manner.

Functionally, secreted effector that enables the plant pathogenic fungus to manipulate host defenses for successful infection. Binds chitin, suppresses chitin-induced immune responses and protects hyphae against degradation by plant hydrolytic enzymes. Chitin-induced polymerization of homodimers forms a contiguous ELP2 highly oligomeric super-complexe that may precipitate at infection sites to eliminate chitin oligomers, and thus suppress the activation of chitin-induced plant immunity. This chain is Secreted LysM effector Vd2LysM, found in Verticillium dahliae (strain VdLs.17 / ATCC MYA-4575 / FGSC 10137) (Verticillium wilt).